Consider the following 253-residue polypeptide: MLTKRIIPCLDVKGGRVVKGVQFLELRDAGDPVEIAEAYDRQGADELTFLDITASSDERNIIIDVVRRTAERVFMPLTVGGGVRIVDDIRNLLNAGADKVSINTAAVHRPEFVREAAERFGSQCTVVAIDARQVPGENRWEVYTHGGRNPTGIDAVEWARRMEEYGAGEILLTSMDRDGTKDGYDISLTRAIVDAVSIPVIASGGVGNLEHLHDGFVKAGASACLAASIFHYKEYTIGEAKEYLRGRGVPVRL.

Active-site residues include Asp-11 and Asp-130.

Belongs to the HisA/HisF family. In terms of assembly, heterodimer of HisH and HisF.

It localises to the cytoplasm. It catalyses the reaction 5-[(5-phospho-1-deoxy-D-ribulos-1-ylimino)methylamino]-1-(5-phospho-beta-D-ribosyl)imidazole-4-carboxamide + L-glutamine = D-erythro-1-(imidazol-4-yl)glycerol 3-phosphate + 5-amino-1-(5-phospho-beta-D-ribosyl)imidazole-4-carboxamide + L-glutamate + H(+). The protein operates within amino-acid biosynthesis; L-histidine biosynthesis; L-histidine from 5-phospho-alpha-D-ribose 1-diphosphate: step 5/9. Its function is as follows. IGPS catalyzes the conversion of PRFAR and glutamine to IGP, AICAR and glutamate. The HisF subunit catalyzes the cyclization activity that produces IGP and AICAR from PRFAR using the ammonia provided by the HisH subunit. In Geobacter metallireducens (strain ATCC 53774 / DSM 7210 / GS-15), this protein is Imidazole glycerol phosphate synthase subunit HisF.